Consider the following 199-residue polypeptide: Probable DNA-directed RNA polymerase subunit delta (199 aa).

One can recognise an HTH HARE-type domain in the interval 14 to 81 (LSLIEVAHAI…GDNMWGLRAW (68 aa)). Composition is skewed to acidic residues over residues 116 to 147 (GDDDDVIDYDDDDPEDDDNYDDDDDQDDDTDD), 157 to 171 (AGVDDTDDDVADETL), and 182 to 199 (LNDDDDDDDYDDEDDESK). Positions 116–199 (GDDDDVIDYD…DYDDEDDESK (84 aa)) are disordered.

This sequence belongs to the RpoE family. In terms of assembly, RNAP is composed of a core of 2 alpha, a beta and a beta' subunits. The core is associated with a delta subunit and one of several sigma factors.

In terms of biological role, participates in both the initiation and recycling phases of transcription. In the presence of the delta subunit, RNAP displays an increased specificity of transcription, a decreased affinity for nucleic acids, and an increased efficiency of RNA synthesis because of enhanced recycling. The protein is Probable DNA-directed RNA polymerase subunit delta of Lactiplantibacillus plantarum (strain ATCC BAA-793 / NCIMB 8826 / WCFS1) (Lactobacillus plantarum).